The sequence spans 293 residues: Elongation factor Ts (293 aa).

An involved in Mg(2+) ion dislocation from EF-Tu region spans residues 79 to 82; it reads TDFV.

The protein belongs to the EF-Ts family.

Its subcellular location is the cytoplasm. Associates with the EF-Tu.GDP complex and induces the exchange of GDP to GTP. It remains bound to the aminoacyl-tRNA.EF-Tu.GTP complex up to the GTP hydrolysis stage on the ribosome. In Bacillus pumilus (strain SAFR-032), this protein is Elongation factor Ts.